The chain runs to 465 residues: Chromosomal replication initiator protein DnaA (465 aa).

Residues 1-85 (MSGFWESCLQ…IALVIGSGKA (85 aa)) are domain I, interacts with DnaA modulators. A domain II region spans residues 85 to 129 (ATAARIQATTTDSGQNAPANPATTSEKRTAASEKARGKGSNYEKS). A compositionally biased stretch (polar residues) spans 93–108 (TTTDSGQNAPANPATT). Residues 93-125 (TTTDSGQNAPANPATTSEKRTAASEKARGKGSN) form a disordered region. Residues 109 to 125 (SEKRTAASEKARGKGSN) show a composition bias toward basic and acidic residues. Residues 130-346 (RLFPSFTFDN…GALKKVLAYS (217 aa)) are domain III, AAA+ region. The ATP site is built by Gly174, Gly176, Lys177, and Thr178. Residues 347 to 465 (SFHGRVIALD…LHVLLQVLKG (119 aa)) are domain IV, binds dsDNA.

It belongs to the DnaA family. Oligomerizes as a right-handed, spiral filament on DNA at oriC.

The protein resides in the cytoplasm. Plays an essential role in the initiation and regulation of chromosomal replication. ATP-DnaA binds to the origin of replication (oriC) to initiate formation of the DNA replication initiation complex once per cell cycle. Binds the DnaA box (a 9 base pair repeat at the origin) and separates the double-stranded (ds)DNA. Forms a right-handed helical filament on oriC DNA; dsDNA binds to the exterior of the filament while single-stranded (ss)DNA is stabiized in the filament's interior. The ATP-DnaA-oriC complex binds and stabilizes one strand of the AT-rich DNA unwinding element (DUE), permitting loading of DNA polymerase. After initiation quickly degrades to an ADP-DnaA complex that is not apt for DNA replication. Binds acidic phospholipids. This is Chromosomal replication initiator protein DnaA from Dechloromonas aromatica (strain RCB).